The primary structure comprises 640 residues: Zinc finger protein 549 (640 aa).

The KRAB domain occupies 27–140; sequence VTFEDIAVYF…PYTSVASGKW (114 aa). The C2H2-type 1; degenerate zinc-finger motif lies at 217-241; the sequence is FQQRRYKCEQVFNEKVHVTEHQRVH. A Glycyl lysine isopeptide (Lys-Gly) (interchain with G-Cter in SUMO2) cross-link involves residue K223. The C2H2-type 2; degenerate zinc finger occupies 247–269; the sequence is YKRREYGKSLNSKYLFVEHQRTH. 13 C2H2-type zinc fingers span residues 275-298, 304-326, 332-355, 361-383, 389-411, 417-439, 445-467, 473-495, 501-523, 529-551, 557-579, 585-607, and 613-635; these read YVCNICGKSFLHKQTLVGHQQRIH, YVCIECGKSLSSKYSLVEHQRTH, YVCNVCGKSFRHKQTFVGHQQRIH, YVCMECGKSFIHSYDRIRHQRVH, YQCSECGKSFIYKQSLLDHHRIH, YECKECGKAFIHKKRLLEHQRIH, YVCIICGKSFIRSSDYMRHQRIH, YECSDCGKAFISKQTLLKHHKIH, YECSECGKGFYLEVKLLQHQRIH, CECNECGKVFSHQKRLLEHQKVH, CECSECGKCFRHRTSLIQHQKVH, YNCTACEKAFIYKNKLVEHQRIH, and YECGKCGKAFNKRYSLVRHQKVH.

This sequence belongs to the krueppel C2H2-type zinc-finger protein family.

Its subcellular location is the nucleus. In terms of biological role, may be involved in transcriptional regulation. The protein is Zinc finger protein 549 (ZNF549) of Homo sapiens (Human).